We begin with the raw amino-acid sequence, 192 residues long: Ion-translocating oxidoreductase complex subunit A (192 aa).

A run of 6 helical transmembrane segments spans residues 5–25 (LLLL…FLGL), 39–59 (IGMS…SYLV), 65–85 (LPFD…AVVV), 102–122 (ALGI…VALL), 134–154 (AIYG…FSAM), and 171–191 (AIAM…TGLV).

It belongs to the NqrDE/RnfAE family. As to quaternary structure, the complex is composed of six subunits: RnfA, RnfB, RnfC, RnfD, RnfE and RnfG.

The protein resides in the cell inner membrane. Functionally, part of a membrane-bound complex that couples electron transfer with translocation of ions across the membrane. The sequence is that of Ion-translocating oxidoreductase complex subunit A from Shewanella baltica (strain OS185).